A 466-amino-acid polypeptide reads, in one-letter code: Asparagine--tRNA ligase (466 aa).

This sequence belongs to the class-II aminoacyl-tRNA synthetase family. Homodimer.

The protein resides in the cytoplasm. The enzyme catalyses tRNA(Asn) + L-asparagine + ATP = L-asparaginyl-tRNA(Asn) + AMP + diphosphate + H(+). The sequence is that of Asparagine--tRNA ligase from Buchnera aphidicola subsp. Baizongia pistaciae (strain Bp).